We begin with the raw amino-acid sequence, 202 residues long: uncharacterized protein (202 aa).

The 61-residue stretch at 14–74 (NAKTERILDV…AMADRYFQRC (61 aa)) folds into the HTH tetR-type domain.

This is an uncharacterized protein from Xanthobacter autotrophicus.